The primary structure comprises 454 residues: Bifunctional protein GlmU (454 aa).

The tract at residues 1–226 is pyrophosphorylase; sequence MSLNVVILAA…AIEVEGANNR (226 aa). Residues 8 to 11, lysine 22, glutamine 73, 78 to 79, 100 to 102, glycine 137, glutamate 151, asparagine 166, and asparagine 224 contribute to the UDP-N-acetyl-alpha-D-glucosamine site; these read LAAG, GT, and YGD. Aspartate 102 serves as a coordination point for Mg(2+). Asparagine 224 is a binding site for Mg(2+). Residues 227 to 247 are linker; the sequence is VQLAQLERAYQARAAEKMMLE. Positions 248-454 are N-acetyltransferase; it reads GANLRDPARI…GWQRPIKIKK (207 aa). Positions 330 and 348 each coordinate UDP-N-acetyl-alpha-D-glucosamine. Histidine 360 acts as the Proton acceptor in catalysis. UDP-N-acetyl-alpha-D-glucosamine-binding residues include tyrosine 363 and asparagine 374. Acetyl-CoA contacts are provided by residues alanine 377, 383-384, serine 402, alanine 420, and arginine 437; that span reads NY.

This sequence in the N-terminal section; belongs to the N-acetylglucosamine-1-phosphate uridyltransferase family. In the C-terminal section; belongs to the transferase hexapeptide repeat family. Homotrimer. Mg(2+) serves as cofactor.

It localises to the cytoplasm. The enzyme catalyses alpha-D-glucosamine 1-phosphate + acetyl-CoA = N-acetyl-alpha-D-glucosamine 1-phosphate + CoA + H(+). It catalyses the reaction N-acetyl-alpha-D-glucosamine 1-phosphate + UTP + H(+) = UDP-N-acetyl-alpha-D-glucosamine + diphosphate. It participates in nucleotide-sugar biosynthesis; UDP-N-acetyl-alpha-D-glucosamine biosynthesis; N-acetyl-alpha-D-glucosamine 1-phosphate from alpha-D-glucosamine 6-phosphate (route II): step 2/2. Its pathway is nucleotide-sugar biosynthesis; UDP-N-acetyl-alpha-D-glucosamine biosynthesis; UDP-N-acetyl-alpha-D-glucosamine from N-acetyl-alpha-D-glucosamine 1-phosphate: step 1/1. It functions in the pathway bacterial outer membrane biogenesis; LPS lipid A biosynthesis. Its function is as follows. Catalyzes the last two sequential reactions in the de novo biosynthetic pathway for UDP-N-acetylglucosamine (UDP-GlcNAc). The C-terminal domain catalyzes the transfer of acetyl group from acetyl coenzyme A to glucosamine-1-phosphate (GlcN-1-P) to produce N-acetylglucosamine-1-phosphate (GlcNAc-1-P), which is converted into UDP-GlcNAc by the transfer of uridine 5-monophosphate (from uridine 5-triphosphate), a reaction catalyzed by the N-terminal domain. The polypeptide is Bifunctional protein GlmU (Shewanella frigidimarina (strain NCIMB 400)).